A 347-amino-acid chain; its full sequence is Protein RecA (347 aa).

67 to 74 (GPESSGKT) is a binding site for ATP.

It belongs to the RecA family.

Its subcellular location is the cytoplasm. Functionally, can catalyze the hydrolysis of ATP in the presence of single-stranded DNA, the ATP-dependent uptake of single-stranded DNA by duplex DNA, and the ATP-dependent hybridization of homologous single-stranded DNAs. It interacts with LexA causing its activation and leading to its autocatalytic cleavage. The chain is Protein RecA from Helicobacter pylori (strain HPAG1).